A 299-amino-acid chain; its full sequence is Regucalcin (299 aa).

A divalent metal cation is bound at residue Glu18. Residues Arg101, Asn103, and Glu121 each coordinate substrate. Residue Lys144 is modified to N6-succinyllysine. Residues Asn154 and Asp204 each coordinate a divalent metal cation. The active-site Proton donor/acceptor is Asp204. An N6-succinyllysine mark is found at Lys244 and Lys253.

It belongs to the SMP-30/CGR1 family. Monomer. It depends on Zn(2+) as a cofactor. Mn(2+) is required as a cofactor. The cofactor is Ca(2+). Requires Mg(2+) as cofactor.

The protein localises to the cytoplasm. It catalyses the reaction D-glucono-1,5-lactone + H2O = D-gluconate + H(+). Gluconolactonase with low activity towards other sugar lactones, including gulonolactone and galactonolactone. Can also hydrolyze diisopropyl phosphorofluoridate and phenylacetate (in vitro). Calcium-binding protein. Modulates Ca(2+) signaling, and Ca(2+)-dependent cellular processes and enzyme activities. The polypeptide is Regucalcin (RGN) (Macaca fascicularis (Crab-eating macaque)).